The sequence spans 418 residues: AA11 family lytic polysaccharide monooxygenase B (418 aa).

A signal peptide spans 1-21 (MMFSKSGLVAVAMLGASAVEA). Cu(+) is bound by residues H22 and H82. 3 disulfide bridges follow: C50/C165, C87/C113, and C206/C240. Residues N120 and N134 are each glycosylated (N-linked (GlcNAc...) asparagine). Positions 226 to 345 (DGNPSNLQPA…SSSSSNGALT (120 aa)) are disordered. A compositionally biased stretch (low complexity) spans 254-345 (SPSTPSTSSS…SSSSSNGALT (92 aa)).

It belongs to the polysaccharide monooxygenase AA11 family. The cofactor is Cu(2+).

The protein localises to the secreted. Its function is as follows. Lytic polysaccharide monooxygenase (LPMO)-like protein that acts as a strict peroxygenase and does not catalyze a monooxygenase reaction. It is indeed hardly active on chitin, while being very active on soluble oligomers of N-acetylglucosamine. Cleaves the glycosidic bonds byoxidizing the C1 position. Also unable to oxidize cellopentaose. Probably breaks glycosidic bonds in non-polymeric substrates possibly carbohydrates in the cell wall of the fungus or its competitors. In the presence of chitotetraose, the enzyme can withstand considerable amounts of H(2)O(2), which it uses to efficiently and stoichiometrically convert this substrate. The chain is AA11 family lytic polysaccharide monooxygenase B from Aspergillus fumigatus (strain ATCC MYA-4609 / CBS 101355 / FGSC A1100 / Af293) (Neosartorya fumigata).